Reading from the N-terminus, the 2004-residue chain is Alpha-2-macroglobulin homolog (2004 aa).

Positions Met1–Ile27 are cleaved as a signal peptide.

The protein belongs to the protease inhibitor I39 (alpha-2-macroglobulin) family. Bacterial alpha-2-macroglobulin subfamily.

In Yersinia pestis, this protein is Alpha-2-macroglobulin homolog.